The following is a 205-amino-acid chain: MRVLLTGFEPFAGELVNPSWEVASRLAERRISGCTVAAERLPTVFGASIACLRTALERHRPQAVVCLGEAGGRAAISIERVALNLDEARIPDNKGQQPVEIPVEPGAPAAYFATLPVRAIVAKLLAAGIPAEISRTAGGFVCNHTFYGLMHHLGQATPVRAGFIHIPYLPEQAVRYPGKASMELATTLRGIEMVLEVLRSEQNVL.

Active-site residues include glutamate 79, cysteine 142, and histidine 165.

This sequence belongs to the peptidase C15 family. In terms of assembly, homotetramer.

The protein localises to the cytoplasm. The enzyme catalyses Release of an N-terminal pyroglutamyl group from a polypeptide, the second amino acid generally not being Pro.. In terms of biological role, removes 5-oxoproline from various penultimate amino acid residues except L-proline. This is Pyrrolidone-carboxylate peptidase from Gloeobacter violaceus (strain ATCC 29082 / PCC 7421).